Reading from the N-terminus, the 335-residue chain is Glycerol-3-phosphate dehydrogenase [NAD(P)+] (335 aa).

Residues serine 15, tyrosine 16, histidine 36, and lysine 110 each contribute to the NADPH site. Residues lysine 110, glycine 139, and threonine 141 each contribute to the sn-glycerol 3-phosphate site. Alanine 143 provides a ligand contact to NADPH. The sn-glycerol 3-phosphate site is built by lysine 195, aspartate 248, serine 258, arginine 259, and asparagine 260. Lysine 195 (proton acceptor) is an active-site residue. An NADPH-binding site is contributed by arginine 259. Residues valine 283 and glutamate 285 each coordinate NADPH.

The protein belongs to the NAD-dependent glycerol-3-phosphate dehydrogenase family.

The protein localises to the cytoplasm. It carries out the reaction sn-glycerol 3-phosphate + NAD(+) = dihydroxyacetone phosphate + NADH + H(+). The enzyme catalyses sn-glycerol 3-phosphate + NADP(+) = dihydroxyacetone phosphate + NADPH + H(+). Its pathway is membrane lipid metabolism; glycerophospholipid metabolism. In terms of biological role, catalyzes the reduction of the glycolytic intermediate dihydroxyacetone phosphate (DHAP) to sn-glycerol 3-phosphate (G3P), the key precursor for phospholipid synthesis. The protein is Glycerol-3-phosphate dehydrogenase [NAD(P)+] of Haemophilus influenzae (strain ATCC 51907 / DSM 11121 / KW20 / Rd).